We begin with the raw amino-acid sequence, 57 residues long: Large ribosomal subunit protein bL32c (57 aa).

It belongs to the bacterial ribosomal protein bL32 family.

The protein resides in the plastid. It is found in the chloroplast. The polypeptide is Large ribosomal subunit protein bL32c (Drimys granadensis).